The chain runs to 1671 residues: Fatty acid synthase alpha subunit aflA (1671 aa).

The interval 40–60 is disordered; that stretch reads ITEEAPTEQPPLSTPPSLPQT. The span at 47-58 shows a compositional bias: pro residues; the sequence is EQPPLSTPPSLP. One can recognise a Carrier domain in the interval 75 to 153; that stretch reads DVALSRVQIV…DANPTVQLGK (79 aa). Ser113 bears the O-(pantetheine 4'-phosphoryl)serine mark. The segment at 492-729 is ketoreductase (KR) domain; that stretch reads GKTFLVTGAG…AMLLTPDFVA (238 aa). In terms of domain architecture, Ketosynthase family 3 (KS3) spans 926-1428; that stretch reads MEVLQEVAVE…QKGGQVVGVA (503 aa). Cys1113 functions as the For beta-ketoacyl synthase activity in the catalytic mechanism. Positions 1244 to 1270 are enriched in low complexity; that stretch reads SMISVTSRPSSRSSTSSEVSDKSSLTS. The segment at 1244–1288 is disordered; sequence SMISVTSRPSSRSSTSSEVSDKSSLTSITSISNPAPRAQRARSTT. Catalysis depends on for beta-ketoacyl synthase activity residues His1313 and His1354. Positions 1497 to 1521 are disordered; sequence PSTGQYRFRSDATPALDDDALPPPG. Asp1552 contributes to the Mg(2+) binding site. Residues 1552-1554, 1598-1608, 1622-1625, and 1652-1654 each bind acetyl-CoA; these read DLV, EAVFKCLQTHS, HGGN, and ISY. Ser1653 is a binding site for Mg(2+).

It belongs to the thiolase-like superfamily. Fungal fatty acid synthetase subunit alpha family. [Alpha(6)beta(6)] hexamers of two multifunctional subunits (alpha and beta). Post-translationally, 4'-phosphopantetheine is transferred from CoA to a specific serine of the acyl carrier domain by the C-terminal PPT domain. This modification is essential for activity because fatty acids are bound in thioester linkage to the sulfhydryl of the prosthetic group.

It catalyses the reaction acetyl-CoA + n malonyl-CoA + 2n NADPH + 4n H(+) = a long-chain-acyl-CoA + n CoA + n CO2 + 2n NADP(+).. It carries out the reaction a fatty acyl-[ACP] + malonyl-[ACP] + H(+) = a 3-oxoacyl-[ACP] + holo-[ACP] + CO2. The catalysed reaction is a (3R)-hydroxyacyl-[ACP] + NADP(+) = a 3-oxoacyl-[ACP] + NADPH + H(+). Its pathway is mycotoxin biosynthesis; aflatoxin biosynthesis. In terms of biological role, fatty acid synthase alpha subunit; part of the gene cluster that mediates the biosynthesis of aflatoxins, a group of polyketide-derived furanocoumarins, and part of the most toxic and carcinogenic compounds among the known mycotoxins. The four major aflatoxins produced by A.parasiticus are aflatoxin B1 (AFB1), aflatoxin B2 (AFB2), aflatoxin G1 (AFG1) and aflatoxin G2 (AFG2). Within the aflatoxin pathway, the fungal fatty acid synthase aflA/aflB provides the hexanoyl starter unit to the acyl-carrier protein (ACP) domain of the norsolorinic acid synthase to allow the first step of the pathway. The biosynthesis of aflatoxins begins with the norsolorinic acid synthase aflC that combines a hexanoyl starter unit produced by the fatty acid synthase aflA/aflB and 7 malonyl-CoA extender units to synthesize the precursor NOR. The second step is the conversion of NOR to averantin (AVN) and requires the norsolorinic acid ketoreductase aflD, which catalyzes the dehydration of norsolorinic acid to form (1'S)-averantin. The norsolorinic acid reductases aflE and aflF may also play a role in the conversion of NOR to AVN. The cytochrome P450 monooxygenase aflG then catalyzes the hydroxylation of AVN to 5'hydroxyaverantin (HAVN). The next step is performed by the 5'-hydroxyaverantin dehydrogenase aflH that transforms HAVN to 5'-oxoaverantin (OAVN) which is further converted to averufin (AVF) by aflK that plays a dual role in the pathway, as a 5'-oxoaverantin cyclase that mediates conversion of 5'-oxoaverantin, as well as a versicolorin B synthase in a later step in the pathway. The averufin oxidase aflI catalyzes the conversion of AVF to versiconal hemiacetal acetate (VHA). VHA is then the substrate for the versiconal hemiacetal acetate esterase aflJ to yield versiconal (VAL). Versicolorin B synthase aflK then converts VAL to versicolorin B (VERB) by closing the bisfuran ring of aflatoxin which is required for DNA-binding, thus giving to aflatoxin its activity as a mutagen. Then, the activity of the versicolorin B desaturase aflL leads to versicolorin A (VERA). A branch point starts from VERB since it can also be converted to dihydrodemethylsterigmatocystin (DMDHST), probably also by aflL, VERA being a precursor for aflatoxins B1 and G1, and DMDHST for aflatoxins B2 and G2. Next, the versicolorin reductase aflM and the cytochrome P450 monooxygenase aflN are involved in conversion of VERA to demethylsterigmatocystin (DMST). AflX and aflY seem also involved in this step, through probable aflX-mediated epoxide ring-opening step following versicolorin A oxidation and aflY-mediated Baeyer-Villiger oxidation required for the formation of the xanthone ring. The methyltransferase aflO then leads to the modification of DMST to sterigmatocystin (ST), and of DMDHST to dihydrosterigmatocystin (DHST). Both ST and DHST are then substrates of the O-methyltransferase aflP to yield O-methylsterigmatocystin (OMST) and dihydro-O-methylsterigmatocystin (DHOMST), respectively. Finally OMST is converted to aflatoxins B1 and G1, and DHOMST to aflatoxins B2 and G2, via the action of several enzymes including O-methylsterigmatocystin oxidoreductase aflQ, the cytochrome P450 monooxygenase aflU, but also the NADH-dependent flavin oxidoreductase nadA which is specifically required for the synthesis of AFG1. In Aspergillus parasiticus (strain ATCC 56775 / NRRL 5862 / SRRC 143 / SU-1), this protein is Fatty acid synthase alpha subunit aflA.